The primary structure comprises 351 residues: MEDRSGFWQVLQQLAPGTALREGLESILLARTGSLIVVGDSPEVLALVDGGFRLDCEFTPTRLYELAKMDGAIILTRDAQRILYANAMLVPDPSIPTSETGTRHRTAERVARQTGELVISISQRRDLITLYKGPMKYILRDFAVVLTKANQALQTLEKYKLVRDQAVARLSALELDDMVSALDVALVVQRTEMLLRIGKEIERYIVELGTEGRLVAMQLEELLAGVAAEGLLIIRDYASTDDPQHAAALRQQMAEWTYEELQDLAAVARLLGAGALDSPLGARGYRMLRRIPRLPAAVIENLVARFGRLQRVLAASLEELDDVEGIGEVRARAIQEGLRRMRMQFALERQL.

The DAC domain maps to 4–142 (RSGFWQVLQQ…GPMKYILRDF (139 aa)). ATP contacts are provided by residues G71, L89, and 102-106 (TRHRT).

This sequence belongs to the DisA family. Homooctamer. Mg(2+) serves as cofactor.

It catalyses the reaction 2 ATP = 3',3'-c-di-AMP + 2 diphosphate. In terms of biological role, participates in a DNA-damage check-point that is active prior to asymmetric division when DNA is damaged. DisA forms globular foci that rapidly scan along the chromosomes during sporulation, searching for lesions. When a lesion is present, DisA pauses at the lesion site. This triggers a cellular response that culminates in a temporary block in sporulation initiation. Also has diadenylate cyclase activity, catalyzing the condensation of 2 ATP molecules into cyclic di-AMP (c-di-AMP). c-di-AMP acts as a signaling molecule that couples DNA integrity with progression of sporulation. The rise in c-di-AMP level generated by DisA while scanning the chromosome, operates as a positive signal that advances sporulation; upon encountering a lesion, the DisA focus arrests at the damaged site and halts c-di-AMP synthesis. This chain is DNA integrity scanning protein DisA, found in Symbiobacterium thermophilum (strain DSM 24528 / JCM 14929 / IAM 14863 / T).